The chain runs to 209 residues: FMN-dependent NADH:quinone oxidoreductase (209 aa).

Residues Ser10, 16-18, and 98-101 each bind FMN; these read SHS and MWNF.

It belongs to the azoreductase type 1 family. As to quaternary structure, homodimer. The cofactor is FMN.

The catalysed reaction is 2 a quinone + NADH + H(+) = 2 a 1,4-benzosemiquinone + NAD(+). The enzyme catalyses N,N-dimethyl-1,4-phenylenediamine + anthranilate + 2 NAD(+) = 2-(4-dimethylaminophenyl)diazenylbenzoate + 2 NADH + 2 H(+). In terms of biological role, quinone reductase that provides resistance to thiol-specific stress caused by electrophilic quinones. Functionally, also exhibits azoreductase activity. Catalyzes the reductive cleavage of the azo bond in aromatic azo compounds to the corresponding amines. This is FMN-dependent NADH:quinone oxidoreductase from Nitratidesulfovibrio vulgaris (strain ATCC 29579 / DSM 644 / CCUG 34227 / NCIMB 8303 / VKM B-1760 / Hildenborough) (Desulfovibrio vulgaris).